The following is a 31-amino-acid chain: Cytochrome b6-f complex subunit 6 (31 aa).

Residues 3-23 form a helical membrane-spanning segment; the sequence is TITSYFGFLLAALTITPALFI.

Belongs to the PetL family. As to quaternary structure, the 4 large subunits of the cytochrome b6-f complex are cytochrome b6, subunit IV (17 kDa polypeptide, PetD), cytochrome f and the Rieske protein, while the 4 small subunits are PetG, PetL, PetM and PetN. The complex functions as a dimer.

The protein resides in the plastid. It is found in the chloroplast thylakoid membrane. Functionally, component of the cytochrome b6-f complex, which mediates electron transfer between photosystem II (PSII) and photosystem I (PSI), cyclic electron flow around PSI, and state transitions. PetL is important for photoautotrophic growth as well as for electron transfer efficiency and stability of the cytochrome b6-f complex. This is Cytochrome b6-f complex subunit 6 from Zea mays (Maize).